Here is an 82-residue protein sequence, read N- to C-terminus: Turripeptide Gsp9.1 (82 aa).

An N-terminal signal peptide occupies residues 1 to 23; that stretch reads MMAKLMITVMMVLLLSLQQGADG. Positions 24–46 are excised as a propeptide; the sequence is RSKRWRKNQMAASSIMRNLITAR. A 4-hydroxyproline mark is found at Pro49 and Pro50. Intrachain disulfides connect Cys53–Cys68, Cys58–Cys72, and Cys64–Cys79. A 4-carboxyglutamate mark is found at Glu60 and Glu63.

Belongs to the Pg turripeptide superfamily. Expressed by the venom duct.

It localises to the secreted. This is Turripeptide Gsp9.1 from Gemmula speciosa (Splendid gem-turris).